Consider the following 238-residue polypeptide: Ribonuclease PH (238 aa).

Residues R86 and 124 to 126 (GTR) contribute to the phosphate site.

It belongs to the RNase PH family. As to quaternary structure, homohexameric ring arranged as a trimer of dimers.

It catalyses the reaction tRNA(n+1) + phosphate = tRNA(n) + a ribonucleoside 5'-diphosphate. Its function is as follows. Phosphorolytic 3'-5' exoribonuclease that plays an important role in tRNA 3'-end maturation. Removes nucleotide residues following the 3'-CCA terminus of tRNAs; can also add nucleotides to the ends of RNA molecules by using nucleoside diphosphates as substrates, but this may not be physiologically important. Probably plays a role in initiation of 16S rRNA degradation (leading to ribosome degradation) during starvation. The sequence is that of Ribonuclease PH from Citrobacter koseri (strain ATCC BAA-895 / CDC 4225-83 / SGSC4696).